A 464-amino-acid chain; its full sequence is ATP synthase subunit beta (464 aa).

153–160 contacts ATP; the sequence is GGAGVGKT.

It belongs to the ATPase alpha/beta chains family. In terms of assembly, F-type ATPases have 2 components, CF(1) - the catalytic core - and CF(0) - the membrane proton channel. CF(1) has five subunits: alpha(3), beta(3), gamma(1), delta(1), epsilon(1). CF(0) has three main subunits: a(1), b(2) and c(9-12). The alpha and beta chains form an alternating ring which encloses part of the gamma chain. CF(1) is attached to CF(0) by a central stalk formed by the gamma and epsilon chains, while a peripheral stalk is formed by the delta and b chains.

Its subcellular location is the cell inner membrane. The catalysed reaction is ATP + H2O + 4 H(+)(in) = ADP + phosphate + 5 H(+)(out). In terms of biological role, produces ATP from ADP in the presence of a proton gradient across the membrane. The catalytic sites are hosted primarily by the beta subunits. The polypeptide is ATP synthase subunit beta (Burkholderia orbicola (strain MC0-3)).